Reading from the N-terminus, the 790-residue chain is Protein SEY1 (790 aa).

At 1–692 the chain is on the cytoplasmic side; the sequence is MELSEGELSH…KRSIVQHITQ (692 aa). The GB1/RHD3-type G domain occupies 55–284; that stretch reads GNNYHIISVF…VSNELFKPEY (230 aa). Position 65–72 (65–72) interacts with GTP; that stretch reads GSQSTGKS. Residues 693–713 traverse the membrane as a helical segment; the sequence is IPYYIYLIILVLGWNEFMAII. Residues 714–716 lie on the Lumenal side of the membrane; sequence RNP. Residues 717–737 traverse the membrane as a helical segment; the sequence is LFFSLSIVLGATVYVLYYLGL. Residues 738 to 790 lie on the Cytoplasmic side of the membrane; that stretch reads LRPALVVAQRTMDEVIVMAKTKLREVLIDDHEVTGRQLNKMAGSKENIELDDM.

It belongs to the TRAFAC class dynamin-like GTPase superfamily. GB1/RHD3 GTPase family. RHD3 subfamily.

It is found in the endoplasmic reticulum membrane. In terms of biological role, cooperates with the reticulon proteins and tubule-shaping DP1 family proteins to generate and maintain the structure of the tubular endoplasmic reticulum network. Has GTPase activity, which is required for its function in ER organization. Required for virulence and resistance to cycloheximide. The polypeptide is Protein SEY1 (Candida albicans (strain SC5314 / ATCC MYA-2876) (Yeast)).